The following is a 498-amino-acid chain: DELTA-thalatoxin-Avl2a (498 aa).

Positions 1–22 are cleaved as a signal peptide; that stretch reads MSPYFKLSSALIFLAITMEALC. Residues 23-35 constitute a propeptide that is removed on maturation; it reads SPIENTSTSNKDN. An MACPF domain is found at 23 to 359; sequence SPIENTSTSN…GFLHFGCSFL (337 aa). A coiled-coil region spans residues 135–159; sequence AAVTNNIASSEEEVQGLSLNLKAYS. Intrachain disulfides connect cysteine 389-cysteine 402, cysteine 396-cysteine 410, and cysteine 412-cysteine 422. The EGF-like domain maps to 410–422; sequence CECGGPYDLARTC.

The protein resides in the secreted. The protein localises to the nematocyst. Its function is as follows. Is lethal to mice, and may cause hemolytic activity. This Actineria villosa (Okinawan sea anemone) protein is DELTA-thalatoxin-Avl2a.